The following is a 529-amino-acid chain: DnaJ homolog l(2)tid, mitochondrial (529 aa).

Residues 1–22 (MISCKNLCVLRQLPLKNCRRHY) constitute a mitochondrion transit peptide. At Arg35 the chain carries Omega-N-methylarginine. The J domain occupies 80-145 (DYYATLGVAK…QKRREYDTYG (66 aa)). Position 121 is an N6-acetyllysine (Lys121). Residues 230-308 (GVNKDVNVNV…CEGKGQTVQR (79 aa)) form a CR-type zinc finger. 8 residues coordinate Zn(2+): Cys243, Cys246, Cys260, Cys263, Cys282, Cys285, Cys296, and Cys299. Residues 243-250 (CPKCAGSK) form a CXXCXGXG motif; approximate repeat. The stretch at 260–267 (CQYCNGTG) is one CXXCXGXG motif repeat. The CXXCXGXG motif; approximate repeat unit spans residues 282–289 (CRYCQGTR). The CXXCXGXG motif repeat unit spans residues 296 to 303 (CAECEGKG). Residues 441–529 (TPGQIHGMAQ…FLNKIKSMFN (89 aa)) are disordered. The span at 497 to 508 (QSEKSETRRKDQ) shows a compositional bias: basic and acidic residues.

The protein resides in the mitochondrion outer membrane. Functionally, may act as a tumor suppressor in larval imaginal disks. The polypeptide is DnaJ homolog l(2)tid, mitochondrial (l(2)tid) (Drosophila virilis (Fruit fly)).